A 696-amino-acid chain; its full sequence is DNA-directed RNA polymerase subunit beta N-terminal section (696 aa).

It belongs to the RNA polymerase beta chain family. As to quaternary structure, in plastids the minimal PEP RNA polymerase catalytic core is composed of four subunits: alpha, beta, beta', and beta''. When a (nuclear-encoded) sigma factor is associated with the core the holoenzyme is formed, which can initiate transcription.

The protein resides in the plastid. Its subcellular location is the chloroplast. The enzyme catalyses RNA(n) + a ribonucleoside 5'-triphosphate = RNA(n+1) + diphosphate. In terms of biological role, DNA-dependent RNA polymerase catalyzes the transcription of DNA into RNA using the four ribonucleoside triphosphates as substrates. The protein is DNA-directed RNA polymerase subunit beta N-terminal section (rpoB1) of Stigeoclonium helveticum (Green alga).